The sequence spans 175 residues: PE-PGRS family protein PE_PGRS8 (175 aa).

Residues M1–A93 form the PE domain.

Belongs to the mycobacterial PE family. PGRS subfamily.

The protein resides in the secreted. Its subcellular location is the cell wall. It is found in the cell surface. This Mycobacterium tuberculosis (strain ATCC 25618 / H37Rv) protein is PE-PGRS family protein PE_PGRS8.